Here is a 729-residue protein sequence, read N- to C-terminus: Catalase-peroxidase (729 aa).

The segment at 1-24 (MDAKTNDGKAGQCPFTSGRGHKNR) is disordered. The segment at residues 95–217 (WHSAGTYRIT…LAAVQMGLIY (123 aa)) is a cross-link (tryptophyl-tyrosyl-methioninium (Trp-Tyr) (with M-243)). His96 acts as the Proton acceptor in catalysis. Positions 217–243 (YVNPEGPNGQPDPLAAAKDIRETFLRM) form a cross-link, tryptophyl-tyrosyl-methioninium (Tyr-Met) (with W-95). Residue His258 coordinates heme b.

Belongs to the peroxidase family. Peroxidase/catalase subfamily. Homodimer or homotetramer. Heme b is required as a cofactor. In terms of processing, formation of the three residue Trp-Tyr-Met cross-link is important for the catalase, but not the peroxidase activity of the enzyme.

The catalysed reaction is H2O2 + AH2 = A + 2 H2O. It catalyses the reaction 2 H2O2 = O2 + 2 H2O. Bifunctional enzyme with both catalase and broad-spectrum peroxidase activity. The chain is Catalase-peroxidase from Nitrobacter winogradskyi (strain ATCC 25391 / DSM 10237 / CIP 104748 / NCIMB 11846 / Nb-255).